A 504-amino-acid chain; its full sequence is MDDICCKDIISDLPEALICHLLSFVPTKEAALTSLLSEKWRYLFAFAPILDFDDSVWMQSPLVYMNEVHRKFMDFVDRVLGLQGNSTLVRFSLNCRNGIDRECIFRWISNVIERGVSDLDLGGNFVSNRSMPSSVFVSKSLVKLRIRTENCTIIDLEDVFLPKLKTLDLSSIWFRDGDTCLLKLISGCQVLEDLTMSDLWWDGYWNRSMSSKTLKRLTVHCSDWDRSPGSISFDTPNLVYFEYFDLVADKYEVVNFDSLVEASIGLRMRHHQRAHASYGDLVVNATNLFMGISNVRILQLFSNALEVLTFCCAPIPVFKKLIHLTVETDKDVGWESLPALLKNCPNLETLVFKGLHHRSTSKCQDTDGCLCKSSKDIRSCLSSSPVKVLKILKFGEVASYFGDEEKQLELVKYFLETMPNLEQMILHYNTRISEGVKSQLDWLVPRVSSSKCSVQLICDNAPTYPFYGGIICDNFITPAPTYPFFGDPLHGMVIPYMGDQPHFI.

The region spanning 7 to 60 (KDIISDLPEALICHLLSFVPTKEAALTSLLSEKWRYLFAFAPILDFDDSVWMQS) is the F-box domain. LRR repeat units follow at residues 69-95 (HRKF…SLNC), 145-171 (RIRT…DLSS), 173-198 (WFRD…TMSD), 286-312 (TNLF…TFCC), 329-354 (DKDV…VFKG), 369-396 (CLCK…KFGE), and 403-428 (DEEK…ILHY). An FBD domain is found at 382-427 (SSSPVKVLKILKFGEVASYFGDEEKQLELVKYFLETMPNLEQMILH).

This chain is Putative F-box/FBD/LRR-repeat protein At3g59240, found in Arabidopsis thaliana (Mouse-ear cress).